A 196-amino-acid polypeptide reads, in one-letter code: WYSSMFAANIKQEPISHHHHHHHAHHSHHAHDSNSNASNSPHQSPLPSPNPPSHTNLQLEQYLKQQQQQQQQHQHQQQQQPMDTLCAAAMTPSFSNNDQNSRGWWSGLPNPMQTIMPANMRPSPTATAATTATDCCAPTTTAAAIALQANDKLQALTPPMDVTPPKSPAKSQQSCAEPEKEHDLMSNSSEDMKYMA.

Disordered stretches follow at residues 16-56 (SHHH…SHTN), 63-82 (LKQQQQQQQQHQHQQQQQPM), and 156-196 (LTPP…KYMA). Over residues 17–29 (HHHHHHHAHHSHH) the composition is skewed to basic residues. Low complexity-rich tracts occupy residues 33-43 (SNSNASNSPHQ) and 65-80 (QQQQQQQQHQHQQQQQ). A compositionally biased stretch (basic and acidic residues) spans 177–196 (EPEKEHDLMSNSSEDMKYMA).

Belongs to the hunchback C2H2-type zinc-finger protein family.

It is found in the nucleus. Functionally, gap class segmentation protein that controls development of head structures. The sequence is that of Protein hunchback (hb) from Drosophila adunca (Fruit fly).